A 570-amino-acid chain; its full sequence is Sulfite reductase [NADPH] hemoprotein beta-component (570 aa).

The [4Fe-4S] cluster site is built by Cys434, Cys440, Cys479, and Cys483. Cys483 contacts siroheme.

This sequence belongs to the nitrite and sulfite reductase 4Fe-4S domain family. As to quaternary structure, alpha(8)-beta(8). The alpha component is a flavoprotein, the beta component is a hemoprotein. The cofactor is siroheme. Requires [4Fe-4S] cluster as cofactor.

The catalysed reaction is hydrogen sulfide + 3 NADP(+) + 3 H2O = sulfite + 3 NADPH + 4 H(+). It participates in sulfur metabolism; hydrogen sulfide biosynthesis; hydrogen sulfide from sulfite (NADPH route): step 1/1. Functionally, component of the sulfite reductase complex that catalyzes the 6-electron reduction of sulfite to sulfide. This is one of several activities required for the biosynthesis of L-cysteine from sulfate. The protein is Sulfite reductase [NADPH] hemoprotein beta-component of Escherichia coli O127:H6 (strain E2348/69 / EPEC).